A 1135-amino-acid polypeptide reads, in one-letter code: LRR receptor-like serine/threonine-protein kinase RGI2 (1135 aa).

The first 35 residues, 1 to 35 (MSLQMPIPRKKALTVSHFSITLSLFLAFFISSTSA), serve as a signal peptide directing secretion. Residues 36 to 723 (STNEVSALIS…QRGVHSHRLR (688 aa)) lie on the Extracellular side of the membrane. Cysteines 69 and 76 form a disulfide. N-linked (GlcNAc...) asparagine glycosylation is found at N101 and N117. 4 LRR repeats span residues 105–129 (FTSLQKLVISNTNLTGAISSEIGDC), 130–153 (SELIVIDLSSNSLVGEIPSSLGKL), 154–177 (KNLQELCLNSNGLTGKIPPELGDC), and 179–203 (SLKNLEIFDNYLSENLPLELGKIST). 4 short sequence motifs (small peptide recognition) span residues 186–187 (FD), 208–211 (RAGG), 231–236 (VLGLAA), and Y259. LRR repeat units follow at residues 226–250 (CRNLKVLGLAATKISGSLPVSLGQL), 251–274 (SKLQSLSVYSTMLSGEIPKELGNC), 276–298 (ELINLFLYDNDLSGTLPKELGKL), 299–323 (QNLEKMLLWQNNLHGPIPEEIGFMK), 325–345 (LNAIDLSMNYFSGTIPKSFGN), 346–370 (LSNLQELMLSSNNITGSIPSILSNC), 372–395 (KLVQFQIDANQISGLIPPEIGLLK), 397–418 (LNIFLGWQNKLEGNIPDELAGC), 419–442 (QNLQALDLSQNYLTGSLPAGLFQL), 444–466 (NLTKLLLISNAISGVIPLEIGNC), 467–490 (TSLVRLRLVNNRITGEIPKGIGFL), 491–514 (QNLSFLDLSENNLSGPVPLEISNC), 516–538 (QLQMLNLSNNTLQGYLPLSLSSL), 539–562 (TKLQVLDVSSNDLTGKIPDSLGHL), 564–586 (SLNRLILSKNSFNGEIPSSLGHC), 587–610 (TNLQLLDLSSNNISGTIPEELFDI), 612–634 (DLDIALNLSWNSLDGFIPERISA), 635–658 (LNRLSVLDISHNMLSGDLSALSGL), and 659–683 (ENLVSLNISHNRFSGYLPDSKVFRQ). N273 is a glycosylation site (N-linked (GlcNAc...) asparagine). A Small peptide recognition motif is present at residues 281–283 (FLY). A Small peptide recognition motif is present at residues 329-332 (DLSM). N345 carries an N-linked (GlcNAc...) asparagine glycan. Residues 351–353 (ELM) carry the Small peptide recognition motif. N-linked (GlcNAc...) asparagine glycans are attached at residues N358 and N369. 2 short sequence motifs (small peptide recognition) span residues 399-403 (IFLGW) and 425-428 (DLSQ). N444 carries N-linked (GlcNAc...) asparagine glycosylation. The Small peptide recognition signature appears at 447–451 (KLLLI). Residue N465 is glycosylated (N-linked (GlcNAc...) asparagine). The short motif at 471-473 (RLR) is the Small peptide recognition element. N-linked (GlcNAc...) asparagine glycans are attached at residues N492, N502, N521, and N524. N598 and N618 each carry an N-linked (GlcNAc...) asparagine glycan. Residues N665 and N707 are each glycosylated (N-linked (GlcNAc...) asparagine). A helical transmembrane segment spans residues 724–744 (IAIGLLISVTAVLAVLGVLAV). Residues 745–1135 (IRAKQMIRDD…ATSNVRPNLK (391 aa)) lie on the Cytoplasmic side of the membrane. Residue T777 is modified to Phosphothreonine. The 282-residue stretch at 785-1066 (LVEGNVIGKG…KDVAAMLSEI (282 aa)) folds into the Protein kinase domain. ATP-binding positions include 791-799 (IGKGCSGIV) and K813. Phosphotyrosine occurs at positions 868 and 907. The active-site Proton acceptor is D920. Y963 and Y970 each carry phosphotyrosine. Residues 1077 to 1135 (DGCSGSCNNGRERGKDDSTSSVMQQTAKYLRSSSTSFSASSLLYSSSSSATSNVRPNLK) form a disordered region. Positions 1108-1128 (SSSTSFSASSLLYSSSSSATS) are enriched in low complexity.

This sequence belongs to the protein kinase superfamily. Ser/Thr protein kinase family. As to quaternary structure, binds to RGF peptides such as RGF1, GLV5/CLEL1/RGF2, GLV7/CLEL3/RGF3, GLV3/RGF4, GLV10/CLEL7/RGF5 and RGF10/CLELN; these interactions trigger the formation of heterodimers with SERK1. Interacts with UBP13. Post-translationally, phosphorylated and ubiquitinated upon interaction with RGF1, thus leading to activation a subsequent degradation. Stabilized by UBP12 and UBP13-mediated deubiquitination. In terms of processing, autophosphorylated. Specific to root meristems, especially in lateral root meristems (LRM).

Its subcellular location is the membrane. It catalyses the reaction L-seryl-[protein] + ATP = O-phospho-L-seryl-[protein] + ADP + H(+). The catalysed reaction is L-threonyl-[protein] + ATP = O-phospho-L-threonyl-[protein] + ADP + H(+). Functionally, together with RGI1, RGI3, RGI4 and RGI5, acts as a receptor of RGF peptides (e.g. RGF1, GLV5/CLEL1/RGF2, GLV7/CLEL3/RGF3, GLV3/RGF4, GLV10/CLEL7/RGF5 and RGF10/CLELN), peptide hormones which maintain the postembryonic root stem cell niche by regulating the expression levels and patterns of the transcription factor PLETHORA (PLT, e.g. PLT1 and PLT2). Links RGF peptides signal with their downstream components. The polypeptide is LRR receptor-like serine/threonine-protein kinase RGI2 (Arabidopsis thaliana (Mouse-ear cress)).